The following is a 350-amino-acid chain: Hydroxymethylglutaryl-CoA synthase (350 aa).

Catalysis depends on E83, which acts as the Proton donor/acceptor. The Acyl-thioester intermediate role is filled by C115. Residues C115 and T156 each contribute to the (3S)-3-hydroxy-3-methylglutaryl-CoA site. A CoA-binding site is contributed by R204. T206 and H239 together coordinate (3S)-3-hydroxy-3-methylglutaryl-CoA. H239 acts as the Proton donor/acceptor in catalysis. K244 provides a ligand contact to CoA. (3S)-3-hydroxy-3-methylglutaryl-CoA contacts are provided by N271 and S301.

The protein belongs to the thiolase-like superfamily. Archaeal HMG-CoA synthase family. Interacts with acetoacetyl-CoA thiolase that catalyzes the precedent step in the pathway and with a DUF35 protein. The acetoacetyl-CoA thiolase/HMG-CoA synthase complex channels the intermediate via a fused CoA-binding site, which allows for efficient coupling of the endergonic thiolase reaction with the exergonic HMGCS reaction.

It carries out the reaction acetoacetyl-CoA + acetyl-CoA + H2O = (3S)-3-hydroxy-3-methylglutaryl-CoA + CoA + H(+). Its pathway is metabolic intermediate biosynthesis; (R)-mevalonate biosynthesis; (R)-mevalonate from acetyl-CoA: step 2/3. Its function is as follows. Catalyzes the condensation of acetyl-CoA with acetoacetyl-CoA to form 3-hydroxy-3-methylglutaryl-CoA (HMG-CoA). Functions in the mevalonate (MVA) pathway leading to isopentenyl diphosphate (IPP), a key precursor for the biosynthesis of isoprenoid compounds that are building blocks of archaeal membrane lipids. This Thermococcus kodakarensis (strain ATCC BAA-918 / JCM 12380 / KOD1) (Pyrococcus kodakaraensis (strain KOD1)) protein is Hydroxymethylglutaryl-CoA synthase.